A 239-amino-acid chain; its full sequence is MEGTAESQTPDLRDVEGKVGRKIPEGLLRGLRGECELGTSGDVLLPGAPSTGHGLGDKIMALRMELAYLRAIDVKILQQLVTLNEGIEAVRWLLEERGTLTSHCSSLTSSQYSLTGGSPGRSRRGSWDSLPDTSSTDRLDSVSIGSFLDTVTPRELDEQGLPGPSCPEIDWAKVIPTEDRARTEVDMTSTKLGSLTATWKLPGDGLQCGPPEPSEDGNANQGFEAHWYWGQCQDDVTFL.

LRR repeat units follow at residues 55–83 and 93–114; these read LGDK…LVTL and LLEE…QYSL. The segment covering 105–116 has biased composition (low complexity); that stretch reads SSLTSSQYSLTG. Positions 105 to 138 are disordered; sequence SSLTSSQYSLTGGSPGRSRRGSWDSLPDTSSTDR. Residues S118, S126, and S129 each carry the phosphoserine modification.

As to quaternary structure, forms a tripartite complex with CDC42BPA/CDC42BPB and MYO18A acting as an adapter connecting both. Its binding to CDC42BPA/CDC42BPB results in their activation by abolition of their negative autoregulation. Interacts with CDC42BPA and CDC42BPB. Phosphorylated.

The protein resides in the cytoplasm. In terms of biological role, acts as an activator of the canonical NF-kappa-B pathway and drive the production of pro-inflammatory cytokines. Promotes the antigen (Ag)-presenting and priming function of dendritic cells via the canonical NF-kappa-B pathway. In concert with MYO18A and CDC42BPA/CDC42BPB, is involved in modulating lamellar actomyosin retrograde flow that is crucial to cell protrusion and migration. Activates CDC42BPA/CDC42BPB and targets it to actomyosin through its interaction with MYO18A, leading to MYL9/MLC2 phosphorylation and MYH9/MYH10-dependent actomyosin assembly in the lamella. In Mus musculus (Mouse), this protein is Leucine rich adaptor protein 1 (Lurap1).